A 258-amino-acid chain; its full sequence is Snake venom serine protease 3 (258 aa).

Residues 1–18 (MVLIRVLANLLILQLSYA) form the signal peptide. Residues 19–24 (QKSSEL) constitute a propeptide that is removed on maturation. In terms of domain architecture, Peptidase S1 spans 25-249 (VIGGDECNIN…YTDWIQSIIA (225 aa)). 6 disulfides stabilise this stretch: Cys-31-Cys-163, Cys-50-Cys-66, Cys-98-Cys-256, Cys-142-Cys-210, Cys-174-Cys-189, and Cys-200-Cys-225. A glycan (N-linked (GlcNAc...) asparagine) is linked at Asn-44. Residue His-65 is the Charge relay system of the active site. An N-linked (GlcNAc...) asparagine glycan is attached at Asn-103. The active-site Charge relay system is the Asp-110. N-linked (GlcNAc...) asparagine glycans are attached at residues Asn-117, Asn-121, and Asn-154. The Charge relay system role is filled by Ser-204. The N-linked (GlcNAc...) asparagine glycan is linked to Asn-251.

The protein belongs to the peptidase S1 family. Snake venom subfamily. Monomer. As to expression, expressed by the venom gland.

The protein resides in the secreted. In terms of biological role, snake venom serine protease that may act in the hemostasis system of the prey. In Craspedocephalus gramineus (Bamboo pit viper), this protein is Snake venom serine protease 3 (TLG3).